The sequence spans 515 residues: MDEFHRCGKEDSFWQPCFLYPLFFQEDLYAISHDHYLDVSSSSRPMEHLSSNDQLSFLTVKRLIGQIRQQNHSIVLFVNCDPNPLADRKKSFYSESVLEALTLVLEVPFSIWSKSSVEGMNECKSFRSIHSIFPFLEDKFPHSNSILDARIPYSIHPEILVRTFRRWIRDAPSLHPLRSVLYDYRNSPENLQRSIIVVPRVNTRFFLFLLNYYVWECESILFSRLKRSSHSRSLAHGSFPQRTHFHRKIKHIIIFSRRNSLKSIWSLKDPKIHYVRYGERPIIAIKGADLLVKKCRYYLLIFRQFYFHLWSEPYRVCSHQLSKNCSSSPGYFLRVRMNPLLVRTKTLDELFIPVLITNEMDPIVPIVPIIGLLATEKFCDISGRPISKLSWTSLTDDDILDRFDQIWRNLFHYYSGSFDRDGLYRIKYILLLSCAKTLACKHKSTIRVVRKELGPELFKKSFSKEREFDSLPFSSKAAARSQRERIWHSDIPQINPLANSWQKIQDLKIENLFDQ.

It belongs to the intron maturase 2 family. MatK subfamily.

The protein localises to the plastid. It is found in the chloroplast. Usually encoded in the trnK tRNA gene intron. Probably assists in splicing its own and other chloroplast group II introns. This is Maturase K from Pinus yunnanensis (Yunnan pine).